The chain runs to 306 residues: Voltage-dependent anion channel-forming protein RSc3414 (306 aa).

The next 4 helical transmembrane spans lie at 28–48 (LFLI…WLPI), 50–70 (VNLS…FLGF), 213–233 (YSVM…FGLV), and 239–259 (FTPV…AIAA).

This sequence belongs to the anion channel-forming bestrophin (TC 1.A.46) family.

It localises to the cell membrane. The polypeptide is Voltage-dependent anion channel-forming protein RSc3414 (Ralstonia nicotianae (strain ATCC BAA-1114 / GMI1000) (Ralstonia solanacearum)).